A 152-amino-acid polypeptide reads, in one-letter code: UPF0178 protein CKL_3490 (152 aa).

Belongs to the UPF0178 family.

The polypeptide is UPF0178 protein CKL_3490 (Clostridium kluyveri (strain ATCC 8527 / DSM 555 / NBRC 12016 / NCIMB 10680 / K1)).